We begin with the raw amino-acid sequence, 340 residues long: Cyclic GMP-AMP synthase-like receptor 3 (340 aa).

Residues serine 62 and 74–76 (EAD) each bind ATP. Mg(2+)-binding residues include glutamate 74, aspartate 76, and aspartate 177. Residues lysine 241 and 255 to 259 (SYHLK) each bind ATP. Residues aspartate 267 and aspartate 270 each contribute to the Mn(2+) site.

Belongs to the mab-21 family. Requires Mg(2+) as cofactor. Mn(2+) is required as a cofactor.

It carries out the reaction 2 ATP = 3',3'-c-di-AMP + 2 diphosphate. In terms of biological role, nucleotidyltransferase that catalyzes the formation of cyclic di-AMP (3',3'-c-di-AMP) from 2 molecules of ATP and plays a key role in innate immunity. Acts as a key sensor of double-stranded RNA (dsRNA), the presence of dsRNA in the cytoplasm being a danger signal that triggers the immune responses. Directly binds dsRNA, activating the nucleotidyltransferase activity, leading to synthesis of 3',3'-c-di-AMP, a second messenger that binds to and activates Sting, thereby triggering the immune response via activation of the NF-kappa-B transcription factor. In Stylophora pistillata (Smooth cauliflower coral), this protein is Cyclic GMP-AMP synthase-like receptor 3.